The primary structure comprises 544 residues: Neurofilament light polypeptide (544 aa).

N-acetylserine is present on Ser2. Positions 2–87 (SSYSYDPYYT…KIVRTQEKVQ (86 aa)) are head. The 311-residue stretch at 84–394 (EKVQLQDLND…KLLEGEETRL (311 aa)) folds into the IF rod domain. A coil 1A region spans residues 88–119 (LQDLNDRFANFIERVHELEQRNKVLEAELLLL). Residues 120–132 (RQKHNEPSRLRDM) are linker 1. Residues 133–228 (YEKEVRDVRL…KVHEEELSQL (96 aa)) are coil 1B. A linker 12 region spans residues 229 to 246 (QSQVQYAQVSLEVEVAKP). Residues 247–265 (DLSSALRDIRGQYEKLAAK) are coil 2A. Residues 266 to 274 (NMQSAEEWF) form a linker 2 region. Residues 275–390 (KSRFTVLTQS…AAYRKLLEGE (116 aa)) are coil 2B. The segment at 391–435 (ETRLSFSGVGAITSGYTQSAPVFGRSAYSLQSSSYMTSRAFPTYY) is tail, subdomain A. Residues 391–544 (ETRLSFSGVG…EESEKKEKKK (154 aa)) are tail. The tract at residues 436-544 (SSHVQEEQLD…EESEKKEKKK (109 aa)) is tail, subdomain B (acidic). A disordered region spans residues 450 to 544 (IESSRAEEAK…EESEKKEKKK (95 aa)). Basic and acidic residues predominate over residues 451-462 (ESSRAEEAKAEA). Positions 463 to 525 (PEEEEEEAAE…EAEGDGEEEG (63 aa)) are enriched in acidic residues. Over residues 526–544 (ESKGDEAAEEESEKKEKKK) the composition is skewed to basic and acidic residues.

It belongs to the intermediate filament family. In terms of assembly, forms homodimers (in vitro).

The protein localises to the cell projection. It localises to the axon. Its subcellular location is the cytoplasm. The protein resides in the cytoskeleton. In terms of biological role, neurofilaments usually contain three intermediate filament proteins: NEFL, NEFM, and NEFH which are involved in the maintenance of neuronal caliber. May additionally cooperate with other neuronal intermediate filament proteins to form neuronal filamentous networks. The sequence is that of Neurofilament light polypeptide (nefl) from Xenopus laevis (African clawed frog).